The following is a 113-amino-acid chain: Biotrophy-associated secreted protein 3 (113 aa).

An N-terminal signal peptide occupies residues 1 to 20; the sequence is MQFSTVSFAIFAILPAMVAA.

It localises to the secreted. In terms of biological role, secreted effector involved in biotrophic colonization of plant cells. This is Biotrophy-associated secreted protein 3 from Pyricularia oryzae (strain 70-15 / ATCC MYA-4617 / FGSC 8958) (Rice blast fungus).